We begin with the raw amino-acid sequence, 475 residues long: Chromosomal replication initiator protein DnaA (475 aa).

Residues 1 to 71 are domain I, interacts with DnaA modulators; that stretch reads MTNDTWNEVR…RQLSAHGAGA (71 aa). The domain II stretch occupies residues 71-133; sequence ADRVKFTVSP…PAQPRELPGA (63 aa). The segment covering 107–127 has biased composition (low complexity); it reads APAPVHHTAPAPAPVAAPAQP. The interval 107 to 129 is disordered; it reads APAPVHHTAPAPAPVAAPAQPRE. The segment at 134-355 is domain III, AAA+ region; sequence KLNPNFTFAN…GALTRLFAFA (222 aa). ATP-binding residues include Gly-178, Gly-180, Lys-181, and Thr-182. The tract at residues 356–475 is domain IV, binds dsDNA; the sequence is DLVRREVTVD…AELLRRTLEA (120 aa).

It belongs to the DnaA family. Oligomerizes as a right-handed, spiral filament on DNA at oriC.

Its subcellular location is the cytoplasm. Plays an essential role in the initiation and regulation of chromosomal replication. ATP-DnaA binds to the origin of replication (oriC) to initiate formation of the DNA replication initiation complex once per cell cycle. Binds the DnaA box (a 9 base pair repeat at the origin) and separates the double-stranded (ds)DNA. Forms a right-handed helical filament on oriC DNA; dsDNA binds to the exterior of the filament while single-stranded (ss)DNA is stabiized in the filament's interior. The ATP-DnaA-oriC complex binds and stabilizes one strand of the AT-rich DNA unwinding element (DUE), permitting loading of DNA polymerase. After initiation quickly degrades to an ADP-DnaA complex that is not apt for DNA replication. Binds acidic phospholipids. The chain is Chromosomal replication initiator protein DnaA from Jannaschia sp. (strain CCS1).